A 111-amino-acid chain; its full sequence is Small ribosomal subunit protein bS16 (111 aa).

The disordered stretch occupies residues 92 to 111 (MDVKAKNRKARSSKQEAKEA).

Belongs to the bacterial ribosomal protein bS16 family.

This chain is Small ribosomal subunit protein bS16, found in Rickettsia akari (strain Hartford).